The following is a 228-amino-acid chain: tRNA (guanine-N(1)-)-methyltransferase (228 aa).

Residues Gly111 and 131 to 136 (IGDFIL) contribute to the S-adenosyl-L-methionine site.

Belongs to the RNA methyltransferase TrmD family. In terms of assembly, homodimer.

Its subcellular location is the cytoplasm. It catalyses the reaction guanosine(37) in tRNA + S-adenosyl-L-methionine = N(1)-methylguanosine(37) in tRNA + S-adenosyl-L-homocysteine + H(+). Its function is as follows. Specifically methylates guanosine-37 in various tRNAs. In Pelagibacter ubique (strain HTCC1062), this protein is tRNA (guanine-N(1)-)-methyltransferase.